A 285-amino-acid polypeptide reads, in one-letter code: Protoheme IX farnesyltransferase (285 aa).

Transmembrane regions (helical) follow at residues 13–33 (LGKLGVVSLLDLAAVAGAFLA), 40–60 (LLPIIPMFIGGTLASMGAMII), 89–109 (EAIIVGSLLAILGTALGFIDN), 110–130 (ILTAFFIALGVVIYIFVYTIL), 137–157 (LNIVIGGFAGSAAAWAGYTSL), 165–185 (GFLLGFLIFMWTPGHFWSLAL), 194–214 (AHYPMLPAVVGITTSARAIAI), 218–238 (LMIPIVLLLGYYINLIALIAF), and 265–285 (FIFSNIYLMLILLIMIIVKLI).

This sequence belongs to the UbiA prenyltransferase family. Protoheme IX farnesyltransferase subfamily.

The protein localises to the cell membrane. It carries out the reaction heme b + (2E,6E)-farnesyl diphosphate + H2O = Fe(II)-heme o + diphosphate. It participates in porphyrin-containing compound metabolism; heme O biosynthesis; heme O from protoheme: step 1/1. Its function is as follows. Converts heme B (protoheme IX) to heme O by substitution of the vinyl group on carbon 2 of heme B porphyrin ring with a hydroxyethyl farnesyl side group. This chain is Protoheme IX farnesyltransferase, found in Saccharolobus islandicus (strain Y.G.57.14 / Yellowstone #1) (Sulfolobus islandicus).